We begin with the raw amino-acid sequence, 378 residues long: MSGSSAKINLLGMNRSDLETFFESLGEKKFRATQLMKWMYHLGVSDFDLMTNMSKALREKLKEVAEVSVPEVIYEDISADGTRKWVMRLAGGNSIETVYIPDNGRGTLCVSSQIGCSLDCSFCSTGKQGFNRNLSSAEIIGQLWIAARSFGDYDLSKERYVTNIVFMGMGEPLLNFDNVVRACDVMMDDFGFGISKRRLTVSTSGLVPALDKLGDVTDVSLAISLHAPNNSLRDVLVPVNKKYPIEELLAACHRYLGKLSDKRRITVEYTLIAGVNDSETHAHELRDLLRDLPCKINLIPFNPFPNSGYERPSRNATLRFQKVLSDAGYVATVRTTRGDDIDAACGQLVGRVEDRTRRSQKYIPLQNINVSPDGRASV.

The Proton acceptor role is filled by Glu-96. The Radical SAM core domain occupies 102 to 340 (DNGRGTLCVS…ATVRTTRGDD (239 aa)). A disulfide bridge connects residues Cys-109 and Cys-345. Positions 116, 120, and 123 each coordinate [4Fe-4S] cluster. S-adenosyl-L-methionine contacts are provided by residues 170-171 (GE), Ser-202, 224-226 (SLH), and Asn-302. Catalysis depends on Cys-345, which acts as the S-methylcysteine intermediate.

This sequence belongs to the radical SAM superfamily. RlmN family. The cofactor is [4Fe-4S] cluster.

The protein localises to the cytoplasm. It carries out the reaction adenosine(2503) in 23S rRNA + 2 reduced [2Fe-2S]-[ferredoxin] + 2 S-adenosyl-L-methionine = 2-methyladenosine(2503) in 23S rRNA + 5'-deoxyadenosine + L-methionine + 2 oxidized [2Fe-2S]-[ferredoxin] + S-adenosyl-L-homocysteine. The enzyme catalyses adenosine(37) in tRNA + 2 reduced [2Fe-2S]-[ferredoxin] + 2 S-adenosyl-L-methionine = 2-methyladenosine(37) in tRNA + 5'-deoxyadenosine + L-methionine + 2 oxidized [2Fe-2S]-[ferredoxin] + S-adenosyl-L-homocysteine. In terms of biological role, specifically methylates position 2 of adenine 2503 in 23S rRNA and position 2 of adenine 37 in tRNAs. m2A2503 modification seems to play a crucial role in the proofreading step occurring at the peptidyl transferase center and thus would serve to optimize ribosomal fidelity. This is Dual-specificity RNA methyltransferase RlmN from Hahella chejuensis (strain KCTC 2396).